Reading from the N-terminus, the 138-residue chain is Histone H2AX (138 aa).

Positions 1 to 23 (MSTTGKGGKAKGKTASSKQVSRS) are disordered. At Ser-2 the chain carries N-acetylserine. N6-acetyllysine is present on residues Lys-6, Lys-9, Lys-11, Lys-13, and Lys-18. Ser-123 carries the post-translational modification Phosphoserine. Residue Lys-124 forms a Glycyl lysine isopeptide (Lys-Gly) (interchain with G-Cter in ubiquitin) linkage. A phosphoserine mark is found at Ser-125, Ser-130, and Ser-135. A [ST]-Q motif motif is present at residues 135-136 (SQ).

This sequence belongs to the histone H2A family. As to quaternary structure, the nucleosome is a histone octamer containing two molecules each of H2A, H2B, H3 and H4 assembled in one H3-H4 heterotetramer and two H2A-H2B heterodimers. The octamer wraps approximately 147 bp of DNA. Post-translationally, monoubiquitination of Lys-124 gives a specific tag for epigenetic transcriptional repression. Acetylation occurs almost exclusively in the MAC.

It is found in the nucleus. The protein localises to the chromosome. Functionally, core component of nucleosome. Nucleosomes wrap and compact DNA into chromatin, limiting DNA accessibility to the cellular machineries which require DNA as a template. Histones thereby play a central role in transcription regulation, DNA repair, DNA replication and chromosomal stability. DNA accessibility is regulated via a complex set of post-translational modifications of histones, also called histone code, and nucleosome remodeling. The sequence is that of Histone H2AX (HTA1) from Tetrahymena pyriformis.